A 101-amino-acid chain; its full sequence is Transcription and mRNA export factor SUS1 (101 aa).

This sequence belongs to the ENY2 family. As to quaternary structure, component of the nuclear pore complex (NPC)-associated TREX-2 complex (transcription and export complex 2), composed of at least SUS1, SAC3, THP1, SEM1, and CDC31. TREX-2 contains 2 SUS1 chains. The TREX-2 complex interacts with the nucleoporin NUP1. Component of the 1.8 MDa SAGA transcription coactivator-HAT complex. SAGA is built of 5 distinct domains with specialized functions. Within the SAGA complex, SUS1, SGF11, SGF73 and UBP8 form an additional subcomplex of SAGA called the DUB module (deubiquitination module). Interacts directly with THP1, SAC3, SGF11, and with the RNA polymerase II.

Its subcellular location is the nucleus. The protein resides in the nucleoplasm. The protein localises to the cytoplasm. It localises to the P-body. In terms of biological role, involved in mRNA export coupled transcription activation by association with both the TREX-2 and the SAGA complexes. At the promoters, SAGA is required for recruitment of the basal transcription machinery. It influences RNA polymerase II transcriptional activity through different activities such as TBP interaction and promoter selectivity, interaction with transcription activators, and chromatin modification through histone acetylation and deubiquitination. Within the SAGA complex, participates in a subcomplex required for deubiquitination of H2B and for the maintenance of steady-state H3 methylation levels. The TREX-2 complex functions in docking export-competent ribonucleoprotein particles (mRNPs) to the nuclear entrance of the nuclear pore complex (nuclear basket). TREX-2 participates in mRNA export and accurate chromatin positioning in the nucleus by tethering genes to the nuclear periphery. May also be involved in cytoplasmic mRNA decay by interaction with components of P-bodies. This Debaryomyces hansenii (strain ATCC 36239 / CBS 767 / BCRC 21394 / JCM 1990 / NBRC 0083 / IGC 2968) (Yeast) protein is Transcription and mRNA export factor SUS1.